Consider the following 189-residue polypeptide: Putative manganese efflux pump MntP (189 aa).

The next 6 membrane-spanning stretches (helical) occupy residues 3–23 (LSAT…ASIG), 41–61 (LIFG…GLFA), 65–85 (IMEW…CRMI), 104–124 (FWVL…IGVG), 132–152 (IVHT…LGML), and 167–187 (IIGG…HMHL).

Belongs to the MntP (TC 9.B.29) family.

It localises to the cell inner membrane. Functionally, probably functions as a manganese efflux pump. The sequence is that of Putative manganese efflux pump MntP from Yersinia pseudotuberculosis serotype O:1b (strain IP 31758).